The chain runs to 225 residues: Holliday junction branch migration complex subunit RuvA (225 aa).

The domain I stretch occupies residues 1–71 (MISWINGELV…EDSDLLFGFT (71 aa)). The domain II stretch occupies residues 72 to 150 (SKDQKFFFIE…SKIQIEEEKG (79 aa)). The interval 151–161 (QEEFEITNPEI) is flexible linker. The tract at residues 161–225 (IYKLMEDLQL…LDQGNSNLAR (65 aa)) is domain III.

It belongs to the RuvA family. Homotetramer. Forms an RuvA(8)-RuvB(12)-Holliday junction (HJ) complex. HJ DNA is sandwiched between 2 RuvA tetramers; dsDNA enters through RuvA and exits via RuvB. An RuvB hexamer assembles on each DNA strand where it exits the tetramer. Each RuvB hexamer is contacted by two RuvA subunits (via domain III) on 2 adjacent RuvB subunits; this complex drives branch migration. In the full resolvosome a probable DNA-RuvA(4)-RuvB(12)-RuvC(2) complex forms which resolves the HJ.

It localises to the cytoplasm. Functionally, the RuvA-RuvB-RuvC complex processes Holliday junction (HJ) DNA during genetic recombination and DNA repair, while the RuvA-RuvB complex plays an important role in the rescue of blocked DNA replication forks via replication fork reversal (RFR). RuvA specifically binds to HJ cruciform DNA, conferring on it an open structure. The RuvB hexamer acts as an ATP-dependent pump, pulling dsDNA into and through the RuvAB complex. HJ branch migration allows RuvC to scan DNA until it finds its consensus sequence, where it cleaves and resolves the cruciform DNA. The polypeptide is Holliday junction branch migration complex subunit RuvA (Prochlorococcus marinus (strain MIT 9215)).